We begin with the raw amino-acid sequence, 667 residues long: Bicarbonate transport ATP-binding protein CmpC (667 aa).

In terms of domain architecture, ABC transporter spans 5 to 239; the sequence is VAVDNIDKVF…RPRKRMEVVE (235 aa). 42–49 provides a ligand contact to ATP; sequence GHSGCGKS. The segment at 281 to 667 is cmpA-like; the sequence is LELGYVPLVA…DNPTPAPVFA (387 aa).

The protein belongs to the ABC transporter superfamily. Nitrate/nitrite/cyanate uptake transporter (NitT) (TC 3.A.1.16) family. In terms of assembly, the complex is composed of two ATP-binding proteins (CmpC and CmpD), a transmembrane protein (CmpB) and a solute-binding protein (CmpA).

It localises to the cell inner membrane. Its function is as follows. Part of the ABC transporter complex CmpABCD involved in bicarbonate transport. Responsible for energy coupling to the transport system. This is Bicarbonate transport ATP-binding protein CmpC (cmpC) from Synechocystis sp. (strain ATCC 27184 / PCC 6803 / Kazusa).